Here is a 336-residue protein sequence, read N- to C-terminus: NADH-quinone oxidoreductase subunit H (336 aa).

Transmembrane regions (helical) follow at residues 4–24 (YILW…LVVA), 75–95 (YLFF…WAVI), 108–128 (LGLL…VIAG), 154–174 (MGFA…TGII), 181–201 (IWHW…IAGI), 233–253 (LFFL…SIMF), 272–292 (FVPG…MFLW), and 308–328 (LGWK…ACMV).

Belongs to the complex I subunit 1 family. NDH-1 is composed of 14 different subunits. Subunits NuoA, H, J, K, L, M, N constitute the membrane sector of the complex.

It localises to the cell inner membrane. It catalyses the reaction a quinone + NADH + 5 H(+)(in) = a quinol + NAD(+) + 4 H(+)(out). In terms of biological role, NDH-1 shuttles electrons from NADH, via FMN and iron-sulfur (Fe-S) centers, to quinones in the respiratory chain. The immediate electron acceptor for the enzyme in this species is believed to be ubiquinone. Couples the redox reaction to proton translocation (for every two electrons transferred, four hydrogen ions are translocated across the cytoplasmic membrane), and thus conserves the redox energy in a proton gradient. This subunit may bind ubiquinone. The sequence is that of NADH-quinone oxidoreductase subunit H from Francisella tularensis subsp. mediasiatica (strain FSC147).